Reading from the N-terminus, the 325-residue chain is Leucine-rich repeat protein FLOR 1 (325 aa).

LRR repeat units follow at residues 65-88 (NRRVTGLSVTSGEVSGQISYQIGD), 89-114 (LVDLRTLDFSYLPHLTGNIPRTITKL), 115-140 (KNLNTLYLKHTSLSGPIPDYISELKS), 142-162 (TFLDLSFNQFTGPIPGSLSQM), 163-185 (PKLEAIQINDNKLTGSIPNSFGS), 187-211 (VGNVPNLYLSNNKLSGKIPESLSKY), 213-233 (FNAVDLSGNGFEGDAFMFFGR), 234-256 (NKTTVRVDLSRNMFNFDLVKVKF), 257-280 (ARSIVSLDLSQNHIYGKIPPALTK), and 281-305 (LHLEHFNVSDNHLCGKIPSGGLLQT).

This sequence belongs to the polygalacturonase-inhibiting protein family. As to quaternary structure, interacts with MADS domain transcription factors during flower development. Component of a complex made of FLOR1, VSP1 and AGAMOUS (AG). Binds directly with AG. As to expression, confined to flowers and inflorescences (e.g. inflorescence meristems, floral meristems, stamens and carpels).

The protein localises to the cytoplasm. It is found in the nucleus. It localises to the perinuclear region. The protein resides in the cell membrane. In terms of biological role, promotes flowering transition in long days (LD). The polypeptide is Leucine-rich repeat protein FLOR 1 (Arabidopsis thaliana (Mouse-ear cress)).